We begin with the raw amino-acid sequence, 215 residues long: 3-isopropylmalate dehydratase small subunit (215 aa).

This sequence belongs to the LeuD family. LeuD type 1 subfamily. In terms of assembly, heterodimer of LeuC and LeuD.

It catalyses the reaction (2R,3S)-3-isopropylmalate = (2S)-2-isopropylmalate. It participates in amino-acid biosynthesis; L-leucine biosynthesis; L-leucine from 3-methyl-2-oxobutanoate: step 2/4. Catalyzes the isomerization between 2-isopropylmalate and 3-isopropylmalate, via the formation of 2-isopropylmaleate. The chain is 3-isopropylmalate dehydratase small subunit from Cellvibrio japonicus (strain Ueda107) (Pseudomonas fluorescens subsp. cellulosa).